We begin with the raw amino-acid sequence, 381 residues long: Putrescine N-methyltransferase 3 (381 aa).

Positions methionine 21 to leucine 81 are disordered. Composition is skewed to polar residues over residues glycine 23–threonine 39 and histidine 46–leucine 81. In terms of domain architecture, PABS spans proline 92–threonine 329. S-adenosyl-L-methionine is bound by residues glutamine 123, glutamate 198, and aspartate 229–glycine 230. Residue aspartate 248 is the Proton acceptor of the active site. Tyrosine 317 is an S-adenosyl-L-methionine binding site.

The protein belongs to the class I-like SAM-binding methyltransferase superfamily. Putrescine methyltransferase family. As to expression, predominantly expressed in roots.

The enzyme catalyses putrescine + S-adenosyl-L-methionine = N-methylputrescine + S-adenosyl-L-homocysteine + H(+). It participates in alkaloid biosynthesis; nicotine biosynthesis. Its function is as follows. Involved in the biosynthesis of pyridine alkaloid natural products, leading mainly to the production of anabasine, anatabine, nicotine and nornicotine, effective deterrents against herbivores with antiparasitic and pesticide properties (neurotoxins); nornicotine serves as the precursor in the synthesis of the carcinogen compound N'-nitrosonornicotine (NNN). Methyltransferase that mediates the conversion of putrescine to N-methylputrescine. Promotes leaves ripening. The polypeptide is Putrescine N-methyltransferase 3 (Nicotiana tabacum (Common tobacco)).